The sequence spans 193 residues: dCTP deaminase (193 aa).

DCTP contacts are provided by residues 110-115 (RSSLAR), D128, 136-138 (VLE), Y171, K178, and Q182. E138 (proton donor/acceptor) is an active-site residue. The disordered stretch occupies residues 169-193 (RPYNRRQDAKYRDQQGAVASRIDKD).

The protein belongs to the dCTP deaminase family. As to quaternary structure, homotrimer.

The enzyme catalyses dCTP + H2O + H(+) = dUTP + NH4(+). It participates in pyrimidine metabolism; dUMP biosynthesis; dUMP from dCTP (dUTP route): step 1/2. Catalyzes the deamination of dCTP to dUTP. This chain is dCTP deaminase, found in Salmonella arizonae (strain ATCC BAA-731 / CDC346-86 / RSK2980).